Here is a 166-residue protein sequence, read N- to C-terminus: Sperm-egg fusion protein TMEM95 (166 aa).

The signal sequence occupies residues 1 to 16 (MWTLALGGIFLAAVEA). 4 disulfide bridges follow: cysteine 17–cysteine 118, cysteine 20–cysteine 121, cysteine 105–cysteine 128, and cysteine 109–cysteine 134. At 17–145 (CVFCRFPDRE…PGSHDLWEAR (129 aa)) the chain is on the extracellular side. N-linked (GlcNAc...) asparagine glycosylation occurs at asparagine 117. A helical transmembrane segment spans residues 146–165 (ILLLFVCGTALLLGVPSLAV). Residue glutamate 166 is a topological domain, cytoplasmic.

Belongs to the TMEM95 family. Does not interact with sperm-egg fusion proteins IZUMO1 or IZUMO1R/JUNO. In terms of processing, N-glycosylated. As to expression, detected in testis and brain with higher levels in brain than testis.

It is found in the cytoplasmic vesicle. The protein localises to the secretory vesicle. It localises to the acrosome membrane. Its function is as follows. Sperm protein required for fusion of sperm with the egg membrane during fertilization. The polypeptide is Sperm-egg fusion protein TMEM95 (Bos taurus (Bovine)).